The primary structure comprises 881 residues: DNA mismatch repair protein MutS (881 aa).

Residue 626 to 633 (GPNMAGKS) coordinates ATP.

Belongs to the DNA mismatch repair MutS family.

In terms of biological role, this protein is involved in the repair of mismatches in DNA. It is possible that it carries out the mismatch recognition step. This protein has a weak ATPase activity. This chain is DNA mismatch repair protein MutS, found in Desulfosudis oleivorans (strain DSM 6200 / JCM 39069 / Hxd3) (Desulfococcus oleovorans).